The primary structure comprises 213 residues: BREX protein BrxA (213 aa).

It belongs to the BrxA family.

In terms of biological role, BREX systems (bacteriophage exclusion) provide immunity against bacteriophage. A probably non-essential part of a type 1 BREX system which protects against dsDNA phage. This system allows phage adsorption but prevents phage DNA replication, without degradation of the phage DNA. Methylation of bacterial DNA by PglX guides self/non-self discrimination. When the brxA-brxB-brxC-pglX-pglZ-brxL genes are transformed into a susceptible E.coli strain (BW25113) they confer very high resistance to infection by bacteriophage VR7 and VpaE1, about 100-fold protection against lambda, T5 and T7 and no protection against RNA phage Qbeta, ssDNA phage M13 or dSDNA phage T4 and VR5. Glycosylated phage DNA is not susceptible to BREX. The BREX system does not confer resistance to lysogenic lambda phage, i.e. prophage that are integrated into the chromosomal DNA and then induced to form phage. This is BREX protein BrxA from Escherichia coli O9:H4 (strain HS).